The sequence spans 153 residues: Superoxide dismutase [Cu-Zn] (153 aa).

Residues H45, H47, and H62 each contribute to the Cu cation site. Residues C56 and C145 are joined by a disulfide bond. Residues H62, H70, H79, and D82 each coordinate Zn(2+). H119 is a binding site for Cu cation.

It belongs to the Cu-Zn superoxide dismutase family. In terms of assembly, homodimer. Cu cation is required as a cofactor. It depends on Zn(2+) as a cofactor.

Its subcellular location is the cytoplasm. It catalyses the reaction 2 superoxide + 2 H(+) = H2O2 + O2. Functionally, destroys radicals which are normally produced within the cells and which are toxic to biological systems. The protein is Superoxide dismutase [Cu-Zn] of Drosophila erecta (Fruit fly).